We begin with the raw amino-acid sequence, 500 residues long: Na(+)/H(+) antiporter NhaB (500 aa).

Helical transmembrane passes span F28–I50, M58–L78, V96–F116, A129–L149, T150–A170, L205–P225, F241–L261, I311–I331, F350–I370, M394–I414, V449–L469, and M477–S497.

It belongs to the NhaB Na(+)/H(+) (TC 2.A.34) antiporter family.

Its subcellular location is the cell inner membrane. The catalysed reaction is 2 Na(+)(in) + 3 H(+)(out) = 2 Na(+)(out) + 3 H(+)(in). In terms of biological role, na(+)/H(+) antiporter that extrudes sodium in exchange for external protons. This Pseudomonas fluorescens (strain Pf0-1) protein is Na(+)/H(+) antiporter NhaB.